The sequence spans 262 residues: Dihydroorotate dehydrogenase B (NAD(+)), electron transfer subunit (262 aa).

An FAD-binding FR-type domain is found at Ser-2 to Leu-102. FAD contacts are provided by residues Arg-53–Ser-56, Leu-70–Arg-72, and Gly-77–Thr-78. Residues Cys-224, Cys-229, Cys-232, and Cys-248 each coordinate [2Fe-2S] cluster.

Belongs to the PyrK family. As to quaternary structure, heterotetramer of 2 PyrK and 2 PyrD type B subunits. However, the metal reductase complex seems to be composed of a heterooctamer of 4 PyrK and 4 PyrD subunits. FAD is required as a cofactor. [2Fe-2S] cluster serves as cofactor.

It is found in the cytoplasm. It participates in pyrimidine metabolism; UMP biosynthesis via de novo pathway; orotate from (S)-dihydroorotate (NAD(+) route): step 1/1. Responsible for channeling the electrons from the oxidation of dihydroorotate from the FMN redox center in the PyrD type B subunit to the ultimate electron acceptor NAD(+). In terms of biological role, together with PyrD, also forms a metal reductase complex able to reduce Fe(III)-chelates to Fe(II)-chelates, as well as soluble Cr(VI) and U(VI), using NADH as electron donor. To a lesser extent, can also use NADPH as an electron donor. Is unable to reduce riboflavin and FMN with NADH as electron donor. May have an in vivo role in metal reduction in D.reducens, which is an organism capable of reducing contaminant heavy metals and radionuclides. In Desulforamulus reducens (strain ATCC BAA-1160 / DSM 100696 / MI-1) (Desulfotomaculum reducens), this protein is Dihydroorotate dehydrogenase B (NAD(+)), electron transfer subunit.